A 1503-amino-acid chain; its full sequence is Lysophospholipase NTE1 (1503 aa).

Residues M1–S25 are Cytoplasmic-facing. A helical transmembrane segment spans residues W26–Y46. Topologically, residues S47–T71 are lumenal. The helical transmembrane segment at M72–V92 threads the bilayer. Residues R93 to I1503 lie on the Cytoplasmic side of the membrane. 3 disordered regions span residues R252–V348, T454–F561, and K722–D745. Polar residues-rich tracts occupy residues T262 to R272, S285 to G302, Q487 to P496, K506 to L542, P552 to F561, and N723 to S737. A nucleoside 3',5'-cyclic phosphate-binding positions include G658 to G777 and R821 to R941. The PNPLA domain occupies L1200 to K1364. The GXGXXG signature appears at G1204–G1209. Positions G1231–G1235 match the GXSXG motif. S1233 (nucleophile) is an active-site residue. D1351 functions as the Proton acceptor in the catalytic mechanism. A DGA/G motif is present at residues D1351–G1353.

This sequence belongs to the NTE family.

It localises to the endoplasmic reticulum membrane. The catalysed reaction is a 1-acyl-sn-glycero-3-phosphocholine + H2O = sn-glycerol 3-phosphocholine + a fatty acid + H(+). Its activity is regulated as follows. Inhibited by organophosphorus esters. Its function is as follows. Intracellular phospholipase B that catalyzes the double deacylation of phosphatidylcholine (PC) to glycerophosphocholine (GroPCho). Plays an important role in membrane lipid homeostasis. Responsible for the rapid PC turnover in response to inositol, elevated temperatures, or when choline is present in the growth medium. This is Lysophospholipase NTE1 (NTE1) from Pyricularia oryzae (strain 70-15 / ATCC MYA-4617 / FGSC 8958) (Rice blast fungus).